The chain runs to 292 residues: Peroxisomal 2,4-dienoyl-CoA reductase SPS19 [(3E)-enoyl-CoA-producing] (292 aa).

NADP(+)-binding residues include isoleucine 36, aspartate 85, and lysine 145. Catalysis depends on serine 162, which acts as the Proton donor. An NADP(+)-binding site is contributed by lysine 180. Lysine 180 (lowers pKa of active site Tyr) is an active-site residue. A Glycyl lysine isopeptide (Lys-Gly) (interchain with G-Cter in ubiquitin) cross-link involves residue lysine 188. Isoleucine 209 contributes to the NADP(+) binding site. The Microbody targeting signal motif lies at 290–292; it reads SKL.

Belongs to the short-chain dehydrogenases/reductases (SDR) family. In terms of assembly, homodimer.

It localises to the peroxisome. It carries out the reaction a (2E,4Z)-dienoyl-CoA + NADPH + H(+) = a 4,5-saturated-(3E)-enoyl-CoA + NADP(+). The catalysed reaction is a (2E,4E)-dienoyl-CoA + NADPH + H(+) = a 4,5-saturated-(3E)-enoyl-CoA + NADP(+). Auxiliary enzyme of beta-oxidation. Participates in the degradation of unsaturated fatty enoyl-CoA esters having double bonds in both even- and odd-numbered positions in peroxisome. Catalyzes the NADP-dependent reduction of 2,4-dienoyl-CoA to yield trans-3-enoyl-CoA. Dispensable for growth and sporulation on solid acetate and oleate media, but is essential for these processes to occur on petroselineate. The protein is Peroxisomal 2,4-dienoyl-CoA reductase SPS19 [(3E)-enoyl-CoA-producing] (SPS19) of Saccharomyces cerevisiae (strain ATCC 204508 / S288c) (Baker's yeast).